The sequence spans 216 residues: UPF0502 protein Pmen_2627 (216 aa).

This sequence belongs to the UPF0502 family.

The chain is UPF0502 protein Pmen_2627 from Ectopseudomonas mendocina (strain ymp) (Pseudomonas mendocina).